Consider the following 347-residue polypeptide: UDP-galactose/UDP-glucose transporter 5 (347 aa).

A run of 8 helical transmembrane segments spans residues 17 to 37 (LWKA…YGLL), 57 to 77 (LFLV…ALLA), 116 to 136 (VQTL…TLIM), 143 to 163 (FDYL…LFPA), 177 to 197 (TVWG…TSTF), 218 to 238 (ICSS…LPAV), 247 to 267 (CLFD…FISY), and 293 to 313 (CIWF…IVFG). The tract at residues 325–347 (SEKPPAAQELPRDEEAQPLKGNP) is disordered.

The protein belongs to the nucleotide-sugar transporter family. UDP-galactose:UMP antiporter (TC 2.A.7.11) subfamily.

It localises to the membrane. Its function is as follows. Sugar transporter involved in the transport of nucleotide-sugars from cytoplasm into the Golgi and/or the endoplasmic reticulum. This chain is UDP-galactose/UDP-glucose transporter 5, found in Arabidopsis thaliana (Mouse-ear cress).